The sequence spans 713 residues: Pheromone-processing carboxypeptidase KEX1 (713 aa).

The signal sequence occupies residues 1 to 22 (MMVSYKLLSLITLLFVAQCTTG). The Lumenal portion of the chain corresponds to 23–616 (LLKQDDYVVR…ESETKTHPKA (594 aa)). Active-site residues include Ser196 and Asp404. 2 N-linked (GlcNAc...) asparagine glycosylation sites follow: Asn457 and Asn465. His468 is a catalytic residue. Residues 500 to 612 (DVLISTNEPT…DDKSESETKT (113 aa)) are disordered. Acidic residues predominate over residues 512–522 (DIEEEELDGEK). The span at 523–552 (EDEKDGVTEGDGEKSDTDEGKDTDKGKDEK) shows a compositional bias: basic and acidic residues. Positions 553–601 (NDDDDDDDDDSDDDSDDDDDDDDDDDDDDDDDDDSDDDDDDDDDSDDNE) are enriched in acidic residues. Positions 602–612 (KDDKSESETKT) are enriched in basic and acidic residues. The helical transmembrane segment at 617–637 (KIALLLLLFISVFGITGSQAL) threads the bilayer. Topologically, residues 638 to 713 (RQRNFQFRRA…IDESFELAEI (76 aa)) are cytoplasmic. The segment at 650–696 (TSNSFSSSSSPNDPSNWDSNDDFDFDIENDPLPSTNNKHKAAKKKKD) is disordered. A compositionally biased stretch (low complexity) spans 651–667 (SNSFSSSSSPNDPSNWD). Over residues 668–678 (SNDDFDFDIEN) the composition is skewed to acidic residues. Residues 686 to 695 (NKHKAAKKKK) are compositionally biased toward basic residues.

The protein belongs to the peptidase S10 family.

It localises to the golgi apparatus. The protein resides in the trans-Golgi network membrane. It carries out the reaction Preferential release of a C-terminal arginine or lysine residue.. Its function is as follows. Protease with a carboxypeptidase B-like function involved in the C-terminal processing of the lysine and arginine residues from protein precursors. Promotes cell fusion and is involved in the programmed cell death. This Vanderwaltozyma polyspora (strain ATCC 22028 / DSM 70294 / BCRC 21397 / CBS 2163 / NBRC 10782 / NRRL Y-8283 / UCD 57-17) (Kluyveromyces polysporus) protein is Pheromone-processing carboxypeptidase KEX1 (KEX1).